The following is a 230-amino-acid chain: Nicotinamide riboside kinase 2 (230 aa).

9–17 (GMTNGGKTT) is an ATP binding site. Thr16 and Asp35 together coordinate Mg(2+). Residue Asp35 is the Proton acceptor of the active site. Substrate is bound by residues 35 to 38 (DDFF) and 54 to 55 (WD). Residue Arg130 coordinates ATP. Substrate-binding positions include Arg131 and 136–137 (YT). Residues 134–136 (RNY) and 174–176 (KSR) each bind ATP. The disordered stretch occupies residues 191–230 (LLNRSQESAPSPARPARTQGPGRGCGHRTARPAASQQDSM).

The protein belongs to the uridine kinase family. NRK subfamily. Monomer. Interacts with ITGB1 alone or when associated with alpha-7, but not with alpha-5. Predominantly expressed in skeletal muscle and, at a much lower level, in the heart (at protein level). No expression in brain, kidney, liver, lung, pancreas nor placenta.

It catalyses the reaction beta-nicotinamide D-riboside + ATP = beta-nicotinamide D-ribonucleotide + ADP + H(+). It carries out the reaction beta-D-ribosylnicotinate + ATP = nicotinate beta-D-ribonucleotide + ADP + H(+). Its pathway is cofactor biosynthesis; NAD(+) biosynthesis. Functionally, catalyzes the phosphorylation of nicotinamide riboside (NR) and nicotinic acid riboside (NaR) to form nicotinamide mononucleotide (NMN) and nicotinic acid mononucleotide (NaMN). Reduces laminin matrix deposition and cell adhesion to laminin, but not to fibronectin. Involved in the regulation of PXN at the protein level and of PXN tyrosine phosphorylation. May play a role in the regulation of terminal myogenesis. In Homo sapiens (Human), this protein is Nicotinamide riboside kinase 2 (NMRK2).